A 437-amino-acid chain; its full sequence is GTPase Der (437 aa).

EngA-type G domains lie at 3 to 167 and 176 to 352; these read NLVA…SKEG and PRFA…QART. Residues 9–16, 56–60, 119–122, 182–189, 229–233, and 294–297 each bind GTP; these read GRPNVGKS, DTGGW, NKTD, GRPNAGKS, DTAGI, and NKWD. Residues 353–437 form the KH-like domain; that stretch reads TRIPTARLNE…TPINIFIRQK (85 aa).

It belongs to the TRAFAC class TrmE-Era-EngA-EngB-Septin-like GTPase superfamily. EngA (Der) GTPase family. Associates with the 50S ribosomal subunit.

Its function is as follows. GTPase that plays an essential role in the late steps of ribosome biogenesis. This is GTPase Der from Phocaeicola vulgatus (strain ATCC 8482 / DSM 1447 / JCM 5826 / CCUG 4940 / NBRC 14291 / NCTC 11154) (Bacteroides vulgatus).